The following is a 960-amino-acid chain: Phosphoenolpyruvate carboxylase 1 (960 aa).

A Phosphoserine modification is found at Ser7. Residues His168 and Lys596 contribute to the active site.

The protein belongs to the PEPCase type 1 family. As to quaternary structure, homotetramer. The cofactor is Mg(2+).

It is found in the cytoplasm. It carries out the reaction oxaloacetate + phosphate = phosphoenolpyruvate + hydrogencarbonate. The protein operates within photosynthesis; C3 acid pathway. By light-reversible phosphorylation. Functionally, through the carboxylation of phosphoenolpyruvate (PEP) it forms oxaloacetate, a four-carbon dicarboxylic acid source for the tricarboxylic acid cycle. The chain is Phosphoenolpyruvate carboxylase 1 (PEPC) from Sorghum bicolor (Sorghum).